The following is a 210-amino-acid chain: Translation initiation factor IF-3 (210 aa).

Residues 169–210 are disordered; the sequence is APKQAPAPKKERTEESAEKAGSAGETEPVPAASAAAEAPANV. Residues 176–186 show a composition bias toward basic and acidic residues; the sequence is PKKERTEESAE. Low complexity predominate over residues 187–210; the sequence is KAGSAGETEPVPAASAAAEAPANV.

This sequence belongs to the IF-3 family. As to quaternary structure, monomer.

The protein localises to the cytoplasm. In terms of biological role, IF-3 binds to the 30S ribosomal subunit and shifts the equilibrium between 70S ribosomes and their 50S and 30S subunits in favor of the free subunits, thus enhancing the availability of 30S subunits on which protein synthesis initiation begins. The sequence is that of Translation initiation factor IF-3 from Deinococcus deserti (strain DSM 17065 / CIP 109153 / LMG 22923 / VCD115).